The following is a 414-amino-acid chain: Glutamyl-tRNA reductase (414 aa).

Substrate contacts are provided by residues 48–51 (TCNR), Ser-104, 109–111 (EAQ), and Gln-115. Cys-49 acts as the Nucleophile in catalysis. Residue 184 to 189 (GAGEMI) participates in NADP(+) binding.

This sequence belongs to the glutamyl-tRNA reductase family. In terms of assembly, homodimer.

It catalyses the reaction (S)-4-amino-5-oxopentanoate + tRNA(Glu) + NADP(+) = L-glutamyl-tRNA(Glu) + NADPH + H(+). The protein operates within porphyrin-containing compound metabolism; protoporphyrin-IX biosynthesis; 5-aminolevulinate from L-glutamyl-tRNA(Glu): step 1/2. Functionally, catalyzes the NADPH-dependent reduction of glutamyl-tRNA(Glu) to glutamate 1-semialdehyde (GSA). This chain is Glutamyl-tRNA reductase, found in Methylobacillus flagellatus (strain ATCC 51484 / DSM 6875 / VKM B-1610 / KT).